The following is a 539-amino-acid chain: MDLGALLDELESGDQELVQKSLAEYNQENSQCFFFNAEQREERKKLGELVISFLNRDLQPSCQIACLETIRILSRDKYALSPFTGRSAIQTLAQYAGLDYSEEMEMPCIPDGESAVEALKGLCNIIYNSVEAQEVAKDLRLVCGLARRLKLYNETRSSHESKFFDLRLLFLLTALSVDMRRQLAQELRGVSLLTDALESTLALKWSDIYEVVTDHLAPPLGKEETERVMEILKALFNITFDISRREVDEEEAALYRHLAAILRHCLLRQSDGEDRTEEFHGHTVNLLVNLPLMCLDVLLTPKVEQGSVEYMGMNMDTVEVLLQFLHRRLDRGHKLREMLTPVLNLLTESSRVHRETRKFLRAKVLPPLRDVKNRPEVGNTLRNKLVRLMTHVDTDVKHCAAEFLFVLCKENVSRFVKYTGYGNAAGLLAARGLLAGGRGEGCYSEDDDTDTEEYREAKANINPVTGRVEEKQPNPMDGMTEEQKEYEAMKLVNMFDKLSREQIIQPMGVTSDGRLGPLDEAAQKMLQRQESSDLDSDSD.

Residues 506–539 are disordered; it reads PMGVTSDGRLGPLDEAAQKMLQRQESSDLDSDSD.

It belongs to the synembryn family.

It is found in the cytoplasm. It localises to the cell cortex. Its function is as follows. Chaperone that specifically binds and folds nascent G alpha proteins prior to G protein heterotrimer formation, promoting their stability and activity: folds GNAI1, GNAO1, GNA13 and GNAQ. Does not fold G(s) G-alpha proteins GNAS nor GNAL. Also acts as a guanine nucleotide exchange factor (GEF) for G alpha proteins by stimulating exchange of bound GDP for free GTP. The polypeptide is Chaperone Ric-8A (ric8a) (Xenopus laevis (African clawed frog)).